The primary structure comprises 445 residues: Exodeoxyribonuclease 7 large subunit (445 aa).

The protein belongs to the XseA family. Heterooligomer composed of large and small subunits.

Its subcellular location is the cytoplasm. It carries out the reaction Exonucleolytic cleavage in either 5'- to 3'- or 3'- to 5'-direction to yield nucleoside 5'-phosphates.. Its function is as follows. Bidirectionally degrades single-stranded DNA into large acid-insoluble oligonucleotides, which are then degraded further into small acid-soluble oligonucleotides. The protein is Exodeoxyribonuclease 7 large subunit of Shewanella pealeana (strain ATCC 700345 / ANG-SQ1).